The sequence spans 466 residues: Probable fibrosin-1 (466 aa).

Lys8 is covalently cross-linked (Glycyl lysine isopeptide (Lys-Gly) (interchain with G-Cter in SUMO2)). Asymmetric dimethylarginine occurs at positions 229 and 239. 2 disordered regions span residues 236 to 315 (AWVR…AAAA) and 410 to 466 (LLYS…RADR). A compositionally biased stretch (basic and acidic residues) spans 248 to 272 (GSDKERPMERREPSVTKEEKDRDLP). Ser281 bears the Phosphoserine mark. Residues 288–311 (RAGEEGARPAKESVRVKEERKEEA) are compositionally biased toward basic and acidic residues. Pro residues predominate over residues 442–459 (APPPLVPAPRPSSPPRAP).

The sequence is that of Probable fibrosin-1 (Fbrs) from Mus musculus (Mouse).